The primary structure comprises 386 residues: Protein-glutamate methylesterase/protein-glutamine glutaminase 3 (386 aa).

The Response regulatory domain occupies 4–121 (KVLVVDDSGF…SRNPQKVKQL (118 aa)). A 4-aspartylphosphate modification is found at Asp-55. Positions 132–194 (SNRRSSGFGS…SHAPAHPTTS (63 aa)) are enriched in low complexity. The disordered stretch occupies residues 132-197 (SNRRSSGFGS…PAHPTTSGTA (66 aa)). One can recognise a CheB-type methylesterase domain in the interval 191-383 (PTTSGTAKRK…LDDIGRHLVE (193 aa)). Residues Ser-210, His-237, and Asp-330 contribute to the active site.

This sequence belongs to the CheB family. Phosphorylated by CheA. Phosphorylation of the N-terminal regulatory domain activates the methylesterase activity.

The protein resides in the cytoplasm. It carries out the reaction [protein]-L-glutamate 5-O-methyl ester + H2O = L-glutamyl-[protein] + methanol + H(+). It catalyses the reaction L-glutaminyl-[protein] + H2O = L-glutamyl-[protein] + NH4(+). Functionally, involved in chemotaxis. Part of a chemotaxis signal transduction system that modulates chemotaxis in response to various stimuli. Catalyzes the demethylation of specific methylglutamate residues introduced into the chemoreceptors (methyl-accepting chemotaxis proteins or MCP) by CheR. Also mediates the irreversible deamidation of specific glutamine residues to glutamic acid. In Pseudomonas syringae pv. syringae (strain B728a), this protein is Protein-glutamate methylesterase/protein-glutamine glutaminase 3.